Reading from the N-terminus, the 436-residue chain is Serine hydroxymethyltransferase (436 aa).

Residues L133 and 137–139 (GHL) contribute to the (6S)-5,6,7,8-tetrahydrofolate site. Residue K242 is modified to N6-(pyridoxal phosphate)lysine. Position 366-368 (366-368 (SPF)) interacts with (6S)-5,6,7,8-tetrahydrofolate.

The protein belongs to the SHMT family. Homodimer. Pyridoxal 5'-phosphate is required as a cofactor.

The protein resides in the cytoplasm. It carries out the reaction (6R)-5,10-methylene-5,6,7,8-tetrahydrofolate + glycine + H2O = (6S)-5,6,7,8-tetrahydrofolate + L-serine. The protein operates within one-carbon metabolism; tetrahydrofolate interconversion. Its pathway is amino-acid biosynthesis; glycine biosynthesis; glycine from L-serine: step 1/1. Functionally, catalyzes the reversible interconversion of serine and glycine with tetrahydrofolate (THF) serving as the one-carbon carrier. This reaction serves as the major source of one-carbon groups required for the biosynthesis of purines, thymidylate, methionine, and other important biomolecules. Also exhibits THF-independent aldolase activity toward beta-hydroxyamino acids, producing glycine and aldehydes, via a retro-aldol mechanism. The sequence is that of Serine hydroxymethyltransferase from Novosphingobium aromaticivorans (strain ATCC 700278 / DSM 12444 / CCUG 56034 / CIP 105152 / NBRC 16084 / F199).